A 292-amino-acid chain; its full sequence is 33 kDa chaperonin (292 aa).

2 disulfide bridges follow: cysteine 230–cysteine 232 and cysteine 263–cysteine 266.

This sequence belongs to the HSP33 family. In terms of processing, under oxidizing conditions two disulfide bonds are formed involving the reactive cysteines. Under reducing conditions zinc is bound to the reactive cysteines and the protein is inactive.

The protein localises to the cytoplasm. In terms of biological role, redox regulated molecular chaperone. Protects both thermally unfolding and oxidatively damaged proteins from irreversible aggregation. Plays an important role in the bacterial defense system toward oxidative stress. The protein is 33 kDa chaperonin of Sodalis glossinidius (strain morsitans).